The following is a 658-amino-acid chain: Protein translocase subunit SecA 3 (658 aa).

ATP is bound by residues Gln-111, 129 to 133 (GEGKT), and Asp-536.

The protein belongs to the SecA family. As to quaternary structure, monomer and homodimer. Part of the essential Sec protein translocation apparatus which comprises SecA, SecYEG and auxiliary proteins SecDF-YajC and YidC.

Its subcellular location is the cell inner membrane. The protein localises to the cytoplasm. It carries out the reaction ATP + H2O + cellular proteinSide 1 = ADP + phosphate + cellular proteinSide 2.. Part of the Sec protein translocase complex. Interacts with the SecYEG preprotein conducting channel. Has a central role in coupling the hydrolysis of ATP to the transfer of proteins into and across the cell membrane, serving both as a receptor for the preprotein-SecB complex and as an ATP-driven molecular motor driving the stepwise translocation of polypeptide chains across the membrane. The sequence is that of Protein translocase subunit SecA 3 from Magnetococcus marinus (strain ATCC BAA-1437 / JCM 17883 / MC-1).